The following is a 276-amino-acid chain: Energy-coupling factor transporter ATP-binding protein EcfA2 (276 aa).

The ABC transporter domain occupies 1 to 233 (MKTPFERLAL…GEEMAGWGLD (233 aa)). 27–34 (GHTGSGKS) is an ATP binding site. The active-site Proton acceptor is the Glu-158.

The protein belongs to the ABC transporter superfamily. Energy-coupling factor EcfA family. As to quaternary structure, forms a stable energy-coupling factor (ECF) transporter complex composed of 2 membrane-embedded substrate-binding proteins (S component), 2 ATP-binding proteins (A component) and 2 transmembrane proteins (T component).

The protein localises to the cell membrane. ATP-binding (A) component of a common energy-coupling factor (ECF) ABC-transporter complex. Unlike classic ABC transporters this ECF transporter provides the energy necessary to transport a number of different substrates. This chain is Energy-coupling factor transporter ATP-binding protein EcfA2, found in Bacillus subtilis (strain 168).